Consider the following 369-residue polypeptide: Serpentine receptor class epsilon-45 (369 aa).

8 helical membrane-spanning segments follow: residues 1-21, 39-59, 67-87, 127-147, 169-191, 195-217, 258-278, and 291-311; these read MIFLIGNSTSNYTVCFPIFIL, FVLTFVSFYYVIKCCYVAIHI, TVLLIILMIQWFEGLLSNILI, FFLGGFLKWHYILSMITTLLV, GLFFMLVVGQTSTNLVMGYLFFF, HFAVGFSIILSTNIIAMGIFTYV, VIHAGLFLILTACFVNLFMYL, and IFESAINLNPVVIVPTLLGSV.

This sequence belongs to the nematode receptor-like protein sre family.

It localises to the membrane. The polypeptide is Serpentine receptor class epsilon-45 (sre-45) (Caenorhabditis elegans).